Reading from the N-terminus, the 259-residue chain is Probable ABC transporter permease protein RF_0080 (259 aa).

The next 5 helical transmembrane spans lie at 13–35 (TIKFAQSVGSFSLFSFAAVSSII), 49–69 (LFIGFHSLPVVAMTTFFSGAV), 148–168 (VIAAIITMPCLVLIGDIIGVM), 195–215 (PIDVISGLVKAGVFGFIISII), and 237–257 (AVVNSSILILISNYLITELFF).

This sequence belongs to the MlaE permease family.

Its subcellular location is the cell inner membrane. Could be part of an ABC transporter complex. In Rickettsia felis (strain ATCC VR-1525 / URRWXCal2) (Rickettsia azadi), this protein is Probable ABC transporter permease protein RF_0080.